The primary structure comprises 517 residues: Nuclear receptor subfamily 5 group A member 2 (517 aa).

The nuclear receptor DNA-binding region spans 43 to 118; it reads DEMCPVCGDK…VGMKLEAVRA (76 aa). Residues cysteine 46, cysteine 49, cysteine 63, cysteine 66, cysteine 82, cysteine 88, cysteine 98, and cysteine 101 each contribute to the Zn(2+) site. 2 NR C4-type zinc fingers span residues 46 to 66 and 82 to 101; these read CPVCGDKVSGYHYGLLTCESC and CIENQSCQIDKTQRKRCPYC. A C-terminal extension (CTE) region spans residues 112 to 127; sequence KLEAVRADRMRGGRNK. An FTZ-F1 box motif is present at residues 128–147; it reads FGPMYKRDRALKQQKKALIR. Residues 182–211 form a disordered region; the sequence is GLPLSHHHHHHHHHHHHSSSSAGLPPADFD. Residues 186–199 show a composition bias toward basic residues; it reads SHHHHHHHHHHHHS. Positions 276–515 constitute an NR LBD domain; the sequence is SFPHLVVELL…NLLIEMLHAK (240 aa). Residues 397–400, tyrosine 492, and lysine 496 contribute to the a phospholipid derivative site; that span reads GATL. Residues 504–515 are AF-2; the sequence is CNNLLIEMLHAK.

It belongs to the nuclear hormone receptor family. NR5 subfamily. As to quaternary structure, monomer; Binds DNA as a monomer.

The protein resides in the nucleus. The protein localises to the chromosome. Orphan nuclear receptor that binds DNA as a monomer to the 5'-TCAAGGCCA-3' sequence and controls expression of target genes: regulates key biological processes, such as cholesterol and bile acid synthesis pathways, as well as cartilage, liver and pancreas morphogenesis. Ligand-binding causes conformational change which causes recruitment of coactivators, promoting target gene activation. The specific ligand is unknown, but specific phospholipids, such as phosphatidylethanolamine, phosphatidylserine, dilauroyl phosphatidylcholine and diundecanoyl phosphatidylcholine can act as ligand in vitro. Acts as a pioneer transcription factor, which unwraps target DNA from histones and elicits local opening of closed chromatin. Involved in the formation of connective tissue in lower jaw. In terms of biological role, lacks transcription factor activity; unable to activate expression of target genes. In Danio rerio (Zebrafish), this protein is Nuclear receptor subfamily 5 group A member 2.